Reading from the N-terminus, the 363-residue chain is Pyrimidine monooxygenase RutA (363 aa).

FMN is bound by residues 49–50 (IK), N115, E124, 140–141 (RY), and S190.

It belongs to the NtaA/SnaA/DszA monooxygenase family. RutA subfamily.

The enzyme catalyses uracil + FMNH2 + NADH + O2 = (Z)-3-ureidoacrylate + FMN + NAD(+) + H2O + H(+). It carries out the reaction thymine + FMNH2 + NADH + O2 = (Z)-2-methylureidoacrylate + FMN + NAD(+) + H2O + H(+). Catalyzes the pyrimidine ring opening between N-3 and C-4 by an unusual flavin hydroperoxide-catalyzed mechanism, adding oxygen atoms in the process to yield ureidoacrylate peracid, that immediately reacts with FMN forming ureidoacrylate and FMN-N(5)-oxide. The FMN-N(5)-oxide reacts spontaneously with NADH to produce FMN. Requires the flavin reductase RutF to regenerate FMN in vivo. The chain is Pyrimidine monooxygenase RutA from Rhizobium rhizogenes (strain K84 / ATCC BAA-868) (Agrobacterium radiobacter).